The chain runs to 142 residues: Translation initiation factor 2 subunit beta (142 aa).

Belongs to the eIF-2-beta/eIF-5 family. Heterotrimer composed of an alpha, a beta and a gamma chain.

In terms of biological role, eIF-2 functions in the early steps of protein synthesis by forming a ternary complex with GTP and initiator tRNA. This is Translation initiation factor 2 subunit beta from Thermococcus gammatolerans (strain DSM 15229 / JCM 11827 / EJ3).